The sequence spans 278 residues: MDTELLKTFLEVSRTRHFGRAAEALYLTQSAVSFRIRQLENQLGVNLFTRHRNNIRLTTAGEKLLPYAETLMNTWQAARKEVAHTSRHNEFSIGASASLWECMLNAWLGRLYQLQEPQSGLQFEARIAQRQSLVKQLHERQLDLLITTEAPKMDEFSSQLLGHFTLALYCSSPARKKSELNYLRLEWGPDFQQHETGLIAADEVPVLTTSSAELARQQLSALNGCSWLPVNWVNEKGGLHTVADSATLSRPLYAIWLQNSDKYSLICDLLKTDVLDDQ.

In terms of domain architecture, HTH lysR-type spans 1–58; it reads MDTELLKTFLEVSRTRHFGRAAEALYLTQSAVSFRIRQLENQLGVNLFTRHRNNIRLT. The segment at residues 18–37 is a DNA-binding region (H-T-H motif); it reads FGRAAEALYLTQSAVSFRIR.

This sequence belongs to the LysR transcriptional regulatory family.

In terms of biological role, negatively regulates the transcription of the flagellar master operon flhDC by binding to the upstream region of the operon. In Salmonella schwarzengrund (strain CVM19633), this protein is HTH-type transcriptional regulator HdfR.